The sequence spans 90 residues: DNA-binding protein HU-beta (90 aa).

Belongs to the bacterial histone-like protein family. Heterodimer of an alpha and a beta chain.

Its function is as follows. Histone-like DNA-binding protein which is capable of wrapping DNA to stabilize it, and thus to prevent its denaturation under extreme environmental conditions. In Salmonella typhi, this protein is DNA-binding protein HU-beta (hupB).